A 435-amino-acid polypeptide reads, in one-letter code: ATP-dependent protease ATPase subunit HslU (435 aa).

ATP contacts are provided by residues Ile-18, 60-65 (GVGKTE), Asp-248, Glu-313, and Arg-385.

Belongs to the ClpX chaperone family. HslU subfamily. In terms of assembly, a double ring-shaped homohexamer of HslV is capped on each side by a ring-shaped HslU homohexamer. The assembly of the HslU/HslV complex is dependent on binding of ATP.

The protein localises to the cytoplasm. In terms of biological role, ATPase subunit of a proteasome-like degradation complex; this subunit has chaperone activity. The binding of ATP and its subsequent hydrolysis by HslU are essential for unfolding of protein substrates subsequently hydrolyzed by HslV. HslU recognizes the N-terminal part of its protein substrates and unfolds these before they are guided to HslV for hydrolysis. This Rhizobium etli (strain ATCC 51251 / DSM 11541 / JCM 21823 / NBRC 15573 / CFN 42) protein is ATP-dependent protease ATPase subunit HslU.